Reading from the N-terminus, the 1446-residue chain is Centrosomal protein of 164 kDa (1446 aa).

Residues 1–195 (MARRPILLGD…PPQGLKAAAC (195 aa)) form an interaction with ATRIP region. The 34-residue stretch at 56-89 (APLPKGWKPCQNITGDLYYFNFDTGQSIWDHPCD) folds into the WW domain. Disordered stretches follow at residues 106 to 132 (PGAIKKKDKKKKKEKKNKKDKETSKSP) and 159 to 185 (PPSALRGSQSVSLGSSADSGHLGEPTL). A compositionally biased stretch (basic residues) spans 109–121 (IKKKDKKKKKEKK). Over residues 164–176 (RGSQSVSLGSSAD) the composition is skewed to polar residues. Ser-202 is subject to Phosphoserine. Disordered stretches follow at residues 217–238 (EETNEEDEEESDNQSVRSSSEL), 250–408 (GGNF…SFLG), 424–570 (GDTL…EPAA), and 830–849 (KRQEVEREHERKMDKMKEEH). A compositionally biased stretch (acidic residues) spans 218–228 (ETNEEDEEESD). A compositionally biased stretch (basic and acidic residues) spans 257-277 (ESPRTSQPDKKDVSLDSDADR). Polar residues predominate over residues 288–312 (GADSSVASANGSKSQGRGASPWNPQ). Basic and acidic residues-rich tracts occupy residues 355 to 372 (KEGECRRESAAKEPKEAS) and 384 to 397 (SEIHGHLKDARHSG). Positions 451–461 (SSIAEPQSKHT) are enriched in polar residues. 2 stretches are compositionally biased toward basic and acidic residues: residues 490 to 499 (PEWKEAEGPG) and 525 to 534 (ERAEEKHSQA). Residues 1143-1197 (EVLGNMRKNLNEETRHLDEMKSAMRKGHDLLKKKEEKLIQLESSLQEEVSDEDTL) are a coiled coil. A disordered region spans residues 1261–1287 (LGSLNSQPPPQGLGSQPPPPLFTSSLR). Residues 1267-1281 (QPPPQGLGSQPPPPL) are compositionally biased toward pro residues. Ser-1369 and Ser-1371 each carry phosphoserine.

In terms of assembly, interacts (via N-terminus) with ATRIP. Interacts with ATM, ATR and MDC1. Interacts with XPA (via N-terminus) upon UV irradiation. Interacts with CEP83, CCDC92, TTBK2, DVL3, NPHP3 and weakly with NPHP4. Interacts with DZIP1.

The protein resides in the cytoplasm. It localises to the cytoskeleton. Its subcellular location is the microtubule organizing center. It is found in the centrosome. The protein localises to the centriole. The protein resides in the nucleus. Its function is as follows. Plays a role in microtubule organization and/or maintenance for the formation of primary cilia (PC), a microtubule-based structure that protrudes from the surface of epithelial cells. Plays a critical role in G2/M checkpoint and nuclear divisions. A key player in the DNA damage-activated ATR/ATM signaling cascade since it is required for the proper phosphorylation of H2AX, RPA, CHEK2 and CHEK1. Plays a critical role in chromosome segregation, acting as a mediator required for the maintenance of genomic stability through modulation of MDC1, RPA and CHEK1. The sequence is that of Centrosomal protein of 164 kDa from Mus musculus (Mouse).